We begin with the raw amino-acid sequence, 345 residues long: Methylthioribose-1-phosphate isomerase (345 aa).

Substrate is bound by residues 47-49, Arg90, and Gln197; that span reads RGA. Asp238 serves as the catalytic Proton donor. 248–249 provides a ligand contact to substrate; sequence NK.

This sequence belongs to the eIF-2B alpha/beta/delta subunits family. MtnA subfamily.

The enzyme catalyses 5-(methylsulfanyl)-alpha-D-ribose 1-phosphate = 5-(methylsulfanyl)-D-ribulose 1-phosphate. The protein operates within amino-acid biosynthesis; L-methionine biosynthesis via salvage pathway; L-methionine from S-methyl-5-thio-alpha-D-ribose 1-phosphate: step 1/6. Functionally, catalyzes the interconversion of methylthioribose-1-phosphate (MTR-1-P) into methylthioribulose-1-phosphate (MTRu-1-P). This is Methylthioribose-1-phosphate isomerase from Thermoanaerobacter pseudethanolicus (strain ATCC 33223 / 39E) (Clostridium thermohydrosulfuricum).